Reading from the N-terminus, the 93-residue chain is Small ribosomal subunit protein uS19m (93 aa).

Belongs to the universal ribosomal protein uS19 family. In terms of assembly, component of the mitochondrial small ribosomal subunit (mt-SSU). Mature yeast 74S mitochondrial ribosomes consist of a small (37S) and a large (54S) subunit. The 37S small subunit contains a 15S ribosomal RNA (15S mt-rRNA) and at least 32 different proteins. The 54S large subunit contains a 21S rRNA (21S mt-rRNA) and at least 45 different proteins.

It is found in the mitochondrion. Component of the mitochondrial ribosome (mitoribosome), a dedicated translation machinery responsible for the synthesis of mitochondrial genome-encoded proteins, including at least some of the essential transmembrane subunits of the mitochondrial respiratory chain. The mitoribosomes are attached to the mitochondrial inner membrane and translation products are cotranslationally integrated into the membrane. This is Small ribosomal subunit protein uS19m (rsm19) from Schizosaccharomyces pombe (strain 972 / ATCC 24843) (Fission yeast).